The primary structure comprises 577 residues: E3 ubiquitin-protein ligase MSL2 (577 aa).

The tract at residues 1–116 is sufficient for interaction with MSL1; it reads MNPVNATALY…CEYITQTTLA (116 aa). The Zn(2+) site is built by C44, C47, C62, H64, C67, C70, C81, and C84. The RING-type zinc finger occupies 44-85; the sequence is CCVCGHLLQDPIAPTNSTCQHYVCKTCKGKKMMMKPSCSWCK. A Glycyl lysine isopeptide (Lys-Gly) (interchain with G-Cter in SUMO2) cross-link involves residue K375. A disordered region spans residues 405–428; sequence TKSMKKSHEHGSKKSHSKSKPGIL. A compositionally biased stretch (basic residues) spans 407 to 423; it reads SMKKSHEHGSKKSHSKS. At S447 the chain carries Phosphoserine. Residues 457–508 enclose the CXC MSL2-type domain; the sequence is QEKKGCKCGRATQNPSVLTCRGQRCPCYSNRKACLDCICRGCQNSYMANGEK. Zn(2+) contacts are provided by C462, C464, C476, C481, C483, C490, C493, C495, and C498.

It belongs to the MSL2 family. In terms of assembly, component of a multisubunit histone acetyltransferase complex (MSL) at least composed of the KAT8/MOF/MYST1, MSL1/hampin, MSL2 and MSL3. Forms a MSL heterotetrameric core with MSL1.

The protein localises to the nucleus. The protein resides in the chromosome. The enzyme catalyses S-ubiquitinyl-[E2 ubiquitin-conjugating enzyme]-L-cysteine + [acceptor protein]-L-lysine = [E2 ubiquitin-conjugating enzyme]-L-cysteine + N(6)-ubiquitinyl-[acceptor protein]-L-lysine.. Its pathway is protein modification; protein ubiquitination. Functionally, non-catalytic component of the MSL histone acetyltransferase complex, a multiprotein complex that mediates the majority of histone H4 acetylation at 'Lys-16' (H4K16ac), an epigenetic mark that prevents chromatin compaction. The MSL complex is required for chromosome stability and genome integrity by maintaining homeostatic levels of H4K16ac. The MSL complex is also involved in gene dosage by promoting up-regulation of genes expressed by the X chromosome. X up-regulation is required to compensate for autosomal biallelic expression. The MSL complex also participates in gene dosage compensation by promoting expression of Tsix non-coding RNA. MSL2 plays a key role in gene dosage by ensuring biallelic expression of a subset of dosage-sensitive genes, including many haploinsufficient genes. Acts by promoting promoter-enhancer contacts, thereby preventing DNA methylation of one allele and creating a methylation-free environment for methylation-sensitive transcription factors such as SP1, KANSL1 and KANSL3. Also acts as an E3 ubiquitin ligase that promotes monoubiquitination of histone H2B at 'Lys-35' (H2BK34Ub), but not that of H2A. This activity is greatly enhanced by heterodimerization with MSL1. H2B ubiquitination in turn stimulates histone H3 methylation at 'Lys-4' (H3K4me) and 'Lys-79' (H3K79me) and leads to gene activation, including that of HOXA9 and MEIS1. The polypeptide is E3 ubiquitin-protein ligase MSL2 (Mus musculus (Mouse)).